A 351-amino-acid polypeptide reads, in one-letter code: Protein RecA (351 aa).

67 to 74 (GPESSGKT) provides a ligand contact to ATP.

The protein belongs to the RecA family.

It is found in the cytoplasm. Functionally, can catalyze the hydrolysis of ATP in the presence of single-stranded DNA, the ATP-dependent uptake of single-stranded DNA by duplex DNA, and the ATP-dependent hybridization of homologous single-stranded DNAs. It interacts with LexA causing its activation and leading to its autocatalytic cleavage. In Mannheimia succiniciproducens (strain KCTC 0769BP / MBEL55E), this protein is Protein RecA.